The chain runs to 376 residues: ATP phosphoribosyltransferase regulatory subunit (376 aa).

The protein belongs to the class-II aminoacyl-tRNA synthetase family. HisZ subfamily. In terms of assembly, heteromultimer composed of HisG and HisZ subunits.

The protein resides in the cytoplasm. It functions in the pathway amino-acid biosynthesis; L-histidine biosynthesis; L-histidine from 5-phospho-alpha-D-ribose 1-diphosphate: step 1/9. In terms of biological role, required for the first step of histidine biosynthesis. May allow the feedback regulation of ATP phosphoribosyltransferase activity by histidine. The sequence is that of ATP phosphoribosyltransferase regulatory subunit from Brucella ovis (strain ATCC 25840 / 63/290 / NCTC 10512).